A 535-amino-acid chain; its full sequence is UDP-glycosyltransferase stmC (535 aa).

N70 and N422 each carry an N-linked (GlcNAc...) asparagine glycan. A helical transmembrane segment spans residues 506–526; that stretch reads ASNLDLYIVCIAFVAVPVGVA.

It belongs to the glycosyltransferase 28 family.

Its subcellular location is the membrane. The enzyme catalyses stromemycin aglycone + UDP-alpha-D-glucose = stromemycin + UDP + H(+). The catalysed reaction is exophillate aglycone + UDP-alpha-D-glucose = exophillate + UDP + H(+). It participates in mycotoxin biosynthesis. Functionally, UDP-glycosyltransferase; part of the gene cluster that mediates the biosynthesis of stromemycin, a depside C-glucoside with two unsaturated C9 side chains belonging to aromatic polyketide glycosides. Acts as the tailoring enzyme responsible for 3-C-glucosylation of bininalkenylresorcylic acid produced by the combined action of the HR-PKS stmA and the NR-PKS stmB to yield stromemycin. Possesses a relatively strict acceptor specificity towards bininalkenylresorcylic acid for C-glycosylation, but is able to use several donors including UDP-alpha-D-galactose, UDP-alpha-D-xylose, UDP-alpha-D-4-keto-6-deoxyglucose, UDP-alpha-D-quinovose, and UDP-beta-L-rhamnose. The chain is UDP-glycosyltransferase stmC from Aspergillus ustus.